The chain runs to 514 residues: MTTTKRPIALLILDGWGYRENTHMNAIYHANTPVLDRLNAQYAHGLISGSGLDVGLPDGQMGNSEVGHINLGSGRIVYQELTRISKAIADHEFEQNPALCDAVDAAVKAGGAVHIMGLLSPGGVHSHEEHIEAMCRMAVARGATKVYLHAFLDGRDTPPRSAKGSLSHFDDLFTTLGHGRIASIIGRYFAMDRDNRWDRVSQAYELITQGKAKFQYDNAVTALEAAYERNENDEFVSSSAITDSEGKVASLNDGDALIFMNFRADRARQITRSFINADFDGFERAVTPKVNFVTLTEYAADIKAPIAYPSENLVNTLGEVLQNRGRTQLRISETEKYAHVTFFFNGGKEEPFNGEDRILINSPKVATYDLQPEMSSTELTDKLVAAIESAQYDVIICNYPNGDMVGHTGNFDAAVKACEAVDACIGRVVDALAKVGGECIITADHGNAEQMTDETTGQAHTAHTSELVPFVFVGRDATIDEGGKLSDVAPTILHLMGETIPAEMTGKPLIHVKE.

Positions 14 and 64 each coordinate Mn(2+). Ser-64 acts as the Phosphoserine intermediate in catalysis. Residues His-125, 155 to 156 (RD), Arg-187, Arg-193, 263 to 266 (RADR), and Lys-336 each bind substrate. Mn(2+) is bound by residues Asp-403, His-407, Asp-444, His-445, and His-463.

This sequence belongs to the BPG-independent phosphoglycerate mutase family. In terms of assembly, monomer. It depends on Mn(2+) as a cofactor.

It carries out the reaction (2R)-2-phosphoglycerate = (2R)-3-phosphoglycerate. The protein operates within carbohydrate degradation; glycolysis; pyruvate from D-glyceraldehyde 3-phosphate: step 3/5. In terms of biological role, catalyzes the interconversion of 2-phosphoglycerate and 3-phosphoglycerate. This Shewanella sp. (strain ANA-3) protein is 2,3-bisphosphoglycerate-independent phosphoglycerate mutase.